The primary structure comprises 466 residues: Cysteine--tRNA ligase (466 aa).

C29 is a binding site for Zn(2+). Positions 31–41 (ATVQAAPHIGH) match the 'HIGH' region motif. Residues C208, H233, and E237 each coordinate Zn(2+). The short motif at 264-268 (KMSKS) is the 'KMSKS' region element. K267 contacts ATP.

Belongs to the class-I aminoacyl-tRNA synthetase family. In terms of assembly, monomer. Zn(2+) serves as cofactor.

The protein resides in the cytoplasm. It catalyses the reaction tRNA(Cys) + L-cysteine + ATP = L-cysteinyl-tRNA(Cys) + AMP + diphosphate. This is Cysteine--tRNA ligase from Streptomyces avermitilis (strain ATCC 31267 / DSM 46492 / JCM 5070 / NBRC 14893 / NCIMB 12804 / NRRL 8165 / MA-4680).